Reading from the N-terminus, the 290-residue chain is Nucleotide-binding protein Bpet0443 (290 aa).

9-16 (GISGSGKS) is a binding site for ATP. 58 to 61 (DVRS) contributes to the GTP binding site.

This sequence belongs to the RapZ-like family.

Displays ATPase and GTPase activities. The sequence is that of Nucleotide-binding protein Bpet0443 from Bordetella petrii (strain ATCC BAA-461 / DSM 12804 / CCUG 43448).